A 147-amino-acid chain; its full sequence is Angiogenin (147 aa).

An N-terminal signal peptide occupies residues 1–24 (MVILLGPLLLVFMLGLGLAPLSLA). The active-site Proton acceptor is the H37. R45 and D46 together coordinate tRNA. Cystine bridges form between C50–C104, C63–C115, and C81–C130. The Nucleolar localization signal signature appears at 55–59 (KQRGL). Residues C104 and I126 each contribute to the tRNA site. The active-site Proton donor is the H137.

It belongs to the pancreatic ribonuclease family. As to quaternary structure, homodimer. Interacts with RNH1; inhibiting ANG ribonuclease activity. Interacts with PCNA.

Its subcellular location is the secreted. The protein resides in the nucleus. The protein localises to the nucleolus. It localises to the cytoplasm. It is found in the stress granule. Its activity is regulated as follows. Has weak tRNA ribonuclease activity by itself due to partial autoinhibition by its C-terminus, which folds into a short alpha-helix that partially occludes the substrate-binding site. In absence of stress, the ribonuclease activity is inhibited by RNH1 in the cytoplasm. In response to stress, dissociates from RNH1 in the cytoplasm and associates with cytoplasmic ribosomes with vacant A-sites: ribosomes directly activate the tRNA ribonuclease activity of ANG by refolding the C-terminal alpha-helix. In response to stress, the angiogenic activity of ANG is inhibited by RNH1 in the nucleus. Secreted ribonuclease that can either promote or restrict cell proliferation of target cells, depending on the context. Endocytosed in target cells via its receptor PLXNB2 and translocates to the cytoplasm or nucleus. Under stress conditions, localizes to the cytoplasm and promotes the assembly of stress granules (SGs): specifically cleaves a subset of tRNAs within anticodon loops to produce tRNA-derived stress-induced fragments (tiRNAs), resulting in translation repression and inhibition of cell proliferation. tiRNas also prevent formation of apoptosome, thereby promoting cell survival. Preferentially cleaves RNAs between a pyrimidine and an adenosine residue, suggesting that it cleaves the anticodon loop of tRNA(Ala) (32-UUAGCAU-38) after positions 33 and 36. Cleaves a subset of tRNAs, including tRNA(Ala), tRNA(Glu), tRNA(Gly), tRNA(Lys), tRNA(Val), tRNA(His), tRNA(Asp) and tRNA(Sec). Under growth conditions and in differentiated cells, translocates to the nucleus and stimulates ribosomal RNA (rRNA) transcription, including that containing the initiation site sequences of 45S rRNA, thereby promoting cell growth and proliferation. Angiogenin induces vascularization of normal and malignant tissues via its ability to promote rRNA transcription. Involved in hematopoietic stem and progenitor cell (HSPC) growth and survival by promoting rRNA transcription in growth conditions and inhibiting translation in response to stress, respectively. Mediates the crosstalk between myeloid and intestinal epithelial cells to protect the intestinal epithelial barrier integrity: secreted by myeloid cells and promotes intestinal epithelial cells proliferation and survival. Also mediates osteoclast-endothelial cell crosstalk in growing bone: produced by osteoclasts and protects the neighboring vascular cells against senescence by promoting rRNA transcription. This Sus scrofa (Pig) protein is Angiogenin (ANG).